A 622-amino-acid polypeptide reads, in one-letter code: Low affinity potassium transport system protein Kup (622 aa).

12 helical membrane-spanning segments follow: residues 9–29 (LPAVTLAAIGVVYGDIGTSPL), 49–69 (VFGFLSLIFWLLVLVVSLKYL), 101–121 (VLVIMGLIGGSFFYGEVVITP), 137–157 (PAMDSYIVPLSIVVLTLLFII), 165–185 (VGKLFAPVMLIWFLTLGVLGV), 212–232 (AVSFFALGAVVLAITGVEALY), 247–267 (WFTVVLPSLVLNYFGQGALLL), 276–296 (PFFLLAPDWALIPLMVLATLA), 337–357 (IYIPAINWMLYIAVVIVIVSF), 363–383 (LAAAYGIAVTGTMVITSILFC), 397–417 (AWVLLVGLLIIDVPMFLANVV), and 419–439 (ILSGGWLPLALGMVMFIIMTT).

The protein belongs to the HAK/KUP transporter (TC 2.A.72) family.

It localises to the cell inner membrane. It carries out the reaction K(+)(in) + H(+)(in) = K(+)(out) + H(+)(out). In terms of biological role, responsible for the low-affinity transport of potassium into the cell. Likely operates as a K(+):H(+) symporter. The sequence is that of Low affinity potassium transport system protein Kup from Pectobacterium atrosepticum (strain SCRI 1043 / ATCC BAA-672) (Erwinia carotovora subsp. atroseptica).